The chain runs to 517 residues: Ribonuclease Y (517 aa).

A helical transmembrane segment spans residues 1 to 21 (MIESLIALIAAIVGLGIGYLV). Residues 207-273 (LINVINIKND…TKVIELLVED (67 aa)) enclose the KH domain. The HD domain maps to 333 to 426 (ALAHSLEVAH…VCAADTLSAA (94 aa)).

The protein belongs to the RNase Y family.

It localises to the cell membrane. Its function is as follows. Endoribonuclease that initiates mRNA decay. The protein is Ribonuclease Y of Campylobacter jejuni subsp. jejuni serotype O:6 (strain 81116 / NCTC 11828).